Reading from the N-terminus, the 258-residue chain is MLKARVIPCLDVKDGRVVKGVNFVDLVDAGDPVEQARLYDAAGADELTFLDITASSDNRETIYDVVRRTAEQVFMPLTVGGGVRTVEDIRRLLLAGADKVSINTAAVHRPDFVREGAEKFGSQCIVVAIDAKAVAPGPDGAPRWEVFTHGGRTPTGLDAVDWARRMAELGAGEILLTSMDRDGTKAGFDIGLTRAVADAVPVPVIASGGVGTLDHLVAGIRDGHATAVLAASIFHFGTFSVGQAKRHMAAAGIPMRLA.

Active-site residues include Asp11 and Asp130.

It belongs to the HisA/HisF family. Heterodimer of HisH and HisF.

The protein localises to the cytoplasm. The enzyme catalyses 5-[(5-phospho-1-deoxy-D-ribulos-1-ylimino)methylamino]-1-(5-phospho-beta-D-ribosyl)imidazole-4-carboxamide + L-glutamine = D-erythro-1-(imidazol-4-yl)glycerol 3-phosphate + 5-amino-1-(5-phospho-beta-D-ribosyl)imidazole-4-carboxamide + L-glutamate + H(+). Its pathway is amino-acid biosynthesis; L-histidine biosynthesis; L-histidine from 5-phospho-alpha-D-ribose 1-diphosphate: step 5/9. IGPS catalyzes the conversion of PRFAR and glutamine to IGP, AICAR and glutamate. The HisF subunit catalyzes the cyclization activity that produces IGP and AICAR from PRFAR using the ammonia provided by the HisH subunit. This is Imidazole glycerol phosphate synthase subunit HisF from Rhodospirillum centenum (strain ATCC 51521 / SW).